The sequence spans 237 residues: Segregation and condensation protein A (237 aa).

This sequence belongs to the ScpA family. As to quaternary structure, component of a cohesin-like complex composed of ScpA, ScpB and the Smc homodimer, in which ScpA and ScpB bind to the head domain of Smc. The presence of the three proteins is required for the association of the complex with DNA.

It is found in the cytoplasm. Participates in chromosomal partition during cell division. May act via the formation of a condensin-like complex containing Smc and ScpB that pull DNA away from mid-cell into both cell halves. This Streptococcus thermophilus (strain ATCC BAA-250 / LMG 18311) protein is Segregation and condensation protein A.